Here is a 230-residue protein sequence, read N- to C-terminus: Protein-L-isoaspartate O-methyltransferase 1 (230 aa).

The active site involves serine 65.

Belongs to the methyltransferase superfamily. L-isoaspartyl/D-aspartyl protein methyltransferase family. Monomer. As to expression, expressed in roots, rosette leaves, stems, cauline leaves, flowers and developing seeds.

It is found in the cytoplasm. It catalyses the reaction [protein]-L-isoaspartate + S-adenosyl-L-methionine = [protein]-L-isoaspartate alpha-methyl ester + S-adenosyl-L-homocysteine. Catalyzes the methyl esterification of L-isoaspartyl residues in peptides and proteins that result from spontaneous decomposition of normal L-aspartyl and L-asparaginyl residues. It plays a role in the repair and/or degradation of damaged proteins. Contributes to seed longevity and germination vigor by limiting the abnormal accumulation of the L-isoaspartyl residues in seed proteins. The sequence is that of Protein-L-isoaspartate O-methyltransferase 1 (PIMT1) from Arabidopsis thaliana (Mouse-ear cress).